The sequence spans 706 residues: MQSDDRSVREGSDSSQTFLMKMAQPTGELTHPSQQQQQQLLQQQSFRSIFGGASDTAEEIDTETDSNHRRPHSFGAAATTPAKLANKNVAPFLVKHIPEQYGPLGSRRTDKLEDLSSPNSKFCYRHRPDLKCRRQADEPSMDKLQRELETLPPSDQQGIAHVWSLFSAAPAKHRKLILQGIMAQCCFPQLSFVSATVRDLIRIDFLTALPPEISFKILCYLDTTSLCKAAQVSSRWRALADDDVVWHRMCEQHIHRKCKKCGWGLPLLERKRLRESKREIELRATTWDVSGPAQNAGGAECSAPHADDVITQKRKADSSDDETAIVKRHCSSLDARPEPDEDYYTTRYRPWKEVYKDRFKVGTNWKYGRCSTKVFKGHTNGVMCLQFEDNILATGSYDATIKIWDTETGEELRTLRGHQSGIRCLQFDDTKLISGSMDRSLKVWNWRTGECISTYTGHRGGVIGLHFDATILASASVDKTVKIWNFEDKSTFLLRGHTDWVNAVRVDTTSRTVFSASDDCTVRLWDLDTKACLRTFHGHVGQVQQVVPLPREFEFEDHDAECDNDNMSTTSGDTESNSLQATLGLESNATETSVFGPSFDNGRPAPPRYIVTSALDSTIRLWETTTGRCLRTFFGHLEGVWALGADTLRIVSGAEDRMVKIWDPRTGKCERTFTGHSGPVTCIGLGDSRFATGSEDCEVRMYSFRN.

The segment covering 1 to 12 has biased composition (basic and acidic residues); it reads MQSDDRSVREGS. Disordered stretches follow at residues 1–43 and 56–76; these read MQSD…LLQQ and TAEEIDTETDSNHRRPHSFGA. Over residues 34–43 the composition is skewed to low complexity; that stretch reads QQQQQQLLQQ. The F-box domain maps to 203–249; sequence IDFLTALPPEISFKILCYLDTTSLCKAAQVSSRWRALADDDVVWHRM. 7 WD repeats span residues 377 to 414, 417 to 456, 458 to 494, 496 to 537, 589 to 632, 635 to 672, and 675 to 706; these read GHTNGVMCLQFEDNILATGSYDATIKIWDTETGEELRT, GHQSGIRCLQFDDTKLISGSMDRSLKVWNWRTGECISTYT, HRGGVIGLHFDATILASASVDKTVKIWNFEDKSTFLL, GHTD…RTFH, ATET…CLRT, GHLEGVWALGADTLRIVSGAEDRMVKIWDPRTGKCERT, and GHSGPVTCIGLGDSRFATGSEDCEVRMYSFRN.

Belongs to the WD repeat MET30/SCONB/SCON-2 family. Component of the SCF(sconB) E3 ubiquitin ligase complex.

It functions in the pathway protein modification; protein ubiquitination. Its function is as follows. Component of the SCF(sconB) E3 ubiquitin ligase complex involved in the regulation of sulfur metabolite repression, probably by mediating the inactivation or degradation of the metR transcription factor. The polypeptide is Probable E3 ubiquitin ligase complex SCF subunit sconB (sconB) (Aspergillus flavus (strain ATCC 200026 / FGSC A1120 / IAM 13836 / NRRL 3357 / JCM 12722 / SRRC 167)).